Reading from the N-terminus, the 461-residue chain is MAVSLWQQCIARLQDELSAQQFSMWIRPLQAEMEGDTLVIYAPNRFVLDWVRDKYLNIINQFFTEQMGSDAPSLRFDIGSRPSAKPVVQATAAVRTSRPVTREVTKPSFNTPHAEPMANANHRSNINPTYQFDNFVEGKSNQLGKAAALQVAENPGGAYNPLFLYGGTGLGKTHLLHAVGNGIIKNNPNAKVVYMHSERFVQDMVKALQNNAIEEFKRYYRSVDALFIDDIQFFANKDRSQEEFFHTFNALLEGNHQIILTSDKYPKEIDGVEDRLKSRFGWGLTVAIEPPELETRVAILMRKAQESGINLPDEVAFFIAKRLRSNVRELEGALNRVIANANFTGRPITIDFVREALRDLLALQEKLVTIDNIQKTVAEYYKIKMADMLSKRRSRSVARPRQMAMALSKELTNQSLPEIGDAFGGRDHTTVLHACRKIAQLREESHDIKEDYANLIRTLSS.

The tract at residues 1-87 (MAVSLWQQCI…IGSRPSAKPV (87 aa)) is domain I, interacts with DnaA modulators. The domain II stretch occupies residues 87 to 124 (VVQATAAVRTSRPVTREVTKPSFNTPHAEPMANANHRS). The tract at residues 99–125 (PVTREVTKPSFNTPHAEPMANANHRSN) is disordered. The segment at 125-341 (NINPTYQFDN…GALNRVIANA (217 aa)) is domain III, AAA+ region. Residues Gly-169, Gly-171, Lys-172, and Thr-173 each contribute to the ATP site. The domain IV, binds dsDNA stretch occupies residues 342 to 461 (NFTGRPITID…YANLIRTLSS (120 aa)).

Belongs to the DnaA family. In terms of assembly, oligomerizes as a right-handed, spiral filament on DNA at oriC.

The protein resides in the cytoplasm. Functionally, plays an essential role in the initiation and regulation of chromosomal replication. ATP-DnaA binds to the origin of replication (oriC) to initiate formation of the DNA replication initiation complex once per cell cycle. Binds the DnaA box (a 9 base pair repeat at the origin) and separates the double-stranded (ds)DNA. Forms a right-handed helical filament on oriC DNA; dsDNA binds to the exterior of the filament while single-stranded (ss)DNA is stabiized in the filament's interior. The ATP-DnaA-oriC complex binds and stabilizes one strand of the AT-rich DNA unwinding element (DUE), permitting loading of DNA polymerase. After initiation quickly degrades to an ADP-DnaA complex that is not apt for DNA replication. Binds acidic phospholipids. This is Chromosomal replication initiator protein DnaA from Shewanella pealeana (strain ATCC 700345 / ANG-SQ1).